Reading from the N-terminus, the 115-residue chain is Iron-sulfur cluster insertion protein ErpA (115 aa).

Positions 43, 107, and 109 each coordinate iron-sulfur cluster.

Belongs to the HesB/IscA family. As to quaternary structure, homodimer. The cofactor is iron-sulfur cluster.

Its function is as follows. Required for insertion of 4Fe-4S clusters for at least IspG. The protein is Iron-sulfur cluster insertion protein ErpA of Photorhabdus laumondii subsp. laumondii (strain DSM 15139 / CIP 105565 / TT01) (Photorhabdus luminescens subsp. laumondii).